The primary structure comprises 193 residues: Putative 3-methyladenine DNA glycosylase (193 aa).

Belongs to the DNA glycosylase MPG family.

This is Putative 3-methyladenine DNA glycosylase from Nitrosospira multiformis (strain ATCC 25196 / NCIMB 11849 / C 71).